An 86-amino-acid polypeptide reads, in one-letter code: Probable weak neurotoxin NNAM3 (86 aa).

The N-terminal stretch at 1–21 (MKTLLLTLVVVTIVCLDLGYT) is a signal peptide. 5 disulfides stabilise this stretch: cysteine 24–cysteine 45, cysteine 27–cysteine 32, cysteine 38–cysteine 63, cysteine 67–cysteine 78, and cysteine 79–cysteine 84.

Belongs to the three-finger toxin family. Ancestral subfamily. Orphan group II sub-subfamily. As to expression, expressed by the venom gland.

The protein localises to the secreted. Its function is as follows. Binds with low affinity to muscular (alpha-1-beta-1-delta-epsilon/CHRNA1-CHRNB1-CHRND-CHRNE) and very low affinity to neuronal (alpha-7/CHRNA7) nicotinic acetylcholine receptor (nAChR). The protein is Probable weak neurotoxin NNAM3 of Naja atra (Chinese cobra).